The primary structure comprises 156 residues: MSRRVRAPIRHILPDPKFGNVMVAKFVNMLMVDGKKSVAEKVVYQALETAGKKKNMEAISLLEEALDKVRPAVEVKSRRVGGATYQVPVEVRPVRQNALAMRWLIEAARNRNEKSMAERLANEFLEAVEERGAAVKKRDETHRMAEANKAFAHFRW.

It belongs to the universal ribosomal protein uS7 family. In terms of assembly, part of the 30S ribosomal subunit. Contacts proteins S9 and S11.

In terms of biological role, one of the primary rRNA binding proteins, it binds directly to 16S rRNA where it nucleates assembly of the head domain of the 30S subunit. Is located at the subunit interface close to the decoding center, probably blocks exit of the E-site tRNA. The protein is Small ribosomal subunit protein uS7 of Dichelobacter nodosus (strain VCS1703A).